Here is a 328-residue protein sequence, read N- to C-terminus: D-cysteine desulfhydrase (328 aa).

The residue at position 51 (K51) is an N6-(pyridoxal phosphate)lysine.

It belongs to the ACC deaminase/D-cysteine desulfhydrase family. As to quaternary structure, homodimer. Pyridoxal 5'-phosphate is required as a cofactor.

It catalyses the reaction D-cysteine + H2O = hydrogen sulfide + pyruvate + NH4(+) + H(+). Functionally, catalyzes the alpha,beta-elimination reaction of D-cysteine and of several D-cysteine derivatives. It could be a defense mechanism against D-cysteine. In Klebsiella pneumoniae (strain 342), this protein is D-cysteine desulfhydrase.